Here is a 529-residue protein sequence, read N- to C-terminus: Peptide chain release factor 3 (529 aa).

The 270-residue stretch at 11-280 (NKRRTFAIIS…GLTKWAPTPL (270 aa)) folds into the tr-type G domain. Residues 20 to 27 (SHPDAGKT), 88 to 92 (DTPGH), and 142 to 145 (NKCD) each bind GTP.

It belongs to the TRAFAC class translation factor GTPase superfamily. Classic translation factor GTPase family. PrfC subfamily.

The protein localises to the cytoplasm. Functionally, increases the formation of ribosomal termination complexes and stimulates activities of RF-1 and RF-2. It binds guanine nucleotides and has strong preference for UGA stop codons. It may interact directly with the ribosome. The stimulation of RF-1 and RF-2 is significantly reduced by GTP and GDP, but not by GMP. This chain is Peptide chain release factor 3, found in Pseudoalteromonas translucida (strain TAC 125).